The following is a 405-amino-acid chain: Aspartokinase (405 aa).

Residue 7 to 10 (KYGG) participates in ATP binding. 25 to 30 (RIAHYR) contacts substrate. Serine 41 contacts ATP. Substrate contacts are provided by residues 47–49 (TDE), glutamate 74, 125–126 (LD), 150–153 (RGGS), and serine 153. Residues 173-174 (TD), 179-184 (YTTDPH), and arginine 209 each bind ATP. ACT domains are found at residues 263–342 (IGLI…IAKV) and 344–405 (IVGV…LDKA). Residues aspartate 270, 274-275 (IA), 288-290 (AVD), glutamine 294, 355-356 (VP), 369-370 (NI), and 376-377 (SE) each bind substrate.

It belongs to the aspartokinase family. Heterotetramer consisting of 2 isoforms Alpha (catalytic and regulation) and of a homodimer of 2 isoforms Beta (regulation and thermostability).

The catalysed reaction is L-aspartate + ATP = 4-phospho-L-aspartate + ADP. Its pathway is amino-acid biosynthesis; L-lysine biosynthesis via DAP pathway; (S)-tetrahydrodipicolinate from L-aspartate: step 1/4. It participates in amino-acid biosynthesis; L-methionine biosynthesis via de novo pathway; L-homoserine from L-aspartate: step 1/3. The protein operates within amino-acid biosynthesis; L-threonine biosynthesis; L-threonine from L-aspartate: step 1/5. Its activity is regulated as follows. Inhibited by threonine. Its function is as follows. Catalyzes the phosphorylation of the beta-carboxyl group of aspartic acid with ATP to yield 4-phospho-L-aspartate, which is involved in the branched biosynthetic pathway leading to the biosynthesis of amino acids threonine, isoleucine and methionine. The chain is Aspartokinase (ask) from Thermus thermophilus.